A 1953-amino-acid polypeptide reads, in one-letter code: Protein BNI1 (1953 aa).

Disordered regions lie at residues 1 to 152 (MLKN…ASSL), 230 to 258 (MRAN…ANSS), 263 to 282 (KSVL…SNSL), and 287 to 306 (TLSS…SGSL). The span at 31-40 (ANSNATNSNT) shows a compositional bias: low complexity. Polar residues-rich tracts occupy residues 41-100 (GSPT…SQYM) and 110-143 (VSSQ…RQHT). Residues 174–696 (EMPSDPYEVE…NVSVASTSDE (523 aa)) form the GBD/FH3 domain. Residues 232 to 246 (ANTTSSSTASRTSMA) are compositionally biased toward low complexity. Residues 263 to 278 (KSVLMTSASSPTSTVY) are compositionally biased toward polar residues. Phosphoserine is present on residues Ser-311 and Ser-325. The interval 312 to 337 (LNNIYRGGAENNTSASTLPGDRTNRP) is disordered. 3 coiled-coil regions span residues 712 to 807 (QTDE…TILN), 864 to 894 (NKRL…EFEK), and 928 to 981 (NKLN…YKGF). Disordered stretches follow at residues 990–1014 (IMDS…SLDP), 1040–1094 (HEIQ…LDAL), and 1149–1330 (TQKV…MPAS). The FH1 domain maps to 1053–1337 (SSSSSDDESE…PASQIKSAVT (285 aa)). Phosphoserine occurs at positions 1085 and 1170. Residues 1184–1211 (DKAEKDMRQHVENGKQGRVVNHEEDKTA) are compositionally biased toward basic and acidic residues. Positions 1217–1237 (SKLNNTDGAEDLSTQSSVLSS) are enriched in polar residues. The segment covering 1238–1250 (QPPPPPPPPPPVP) has biased composition (pro residues). The segment covering 1257–1270 (SLEKEKKSEDDTVK) has biased composition (basic and acidic residues). A compositionally biased stretch (pro residues) spans 1278–1292 (PAPPPPPPPPPPPPM). Phosphoserine occurs at positions 1338 and 1344. An FH2 domain is found at 1348 to 1766 (FEKYPRPHKK…YIKHKKIVEE (419 aa)). Positions 1732 to 1811 (KFADFINEYK…DKLLEQLKNA (80 aa)) form a coiled coil. Positions 1768 to 1779 (QKRAQEKEKQKE) are enriched in basic and acidic residues. Disordered regions lie at residues 1768–1797 (QKRA…AEDR), 1809–1844 (KNAG…LLND), and 1872–1899 (PTPL…LEDQ). Residues 1792-1826 (DEAEDRRAVMDKLLEQLKNAGPAKSDPSSARKRAL) form the DAD domain. A compositionally biased stretch (basic residues) spans 1821 to 1830 (ARKRALVRKK). Residues 1880–1896 (VMNTSEDLPSPSKTSAL) show a composition bias toward polar residues. Residue Thr-1918 is modified to Phosphothreonine.

The protein belongs to the formin homology family. BNI1 subfamily. In terms of assembly, homodimer, and possibly also homotetramer. Interacts with PFY1 via the FH1 domain and with actin via the FH2 domain.

The protein resides in the cell membrane. Its subcellular location is the cell projection. It localises to the ruffle membrane. It is found in the cytoplasm. The protein localises to the cytoskeleton. In terms of biological role, required for the assembly of F-actin structures, such as actin cables and stress fibers. Nucleates actin filaments. Binds to the barbed end of the actin filament and acts as a leaky capper, slowing both polymerization and depolymerization. Protects the growing actin fiber from tight capping proteins and so increases the time of elongation and the total amount of F-actin. May organize microtubules by mediating spindle positioning and movement in the budding process. Potential target of the RHO family members. This chain is Protein BNI1 (BNI1), found in Saccharomyces cerevisiae (strain ATCC 204508 / S288c) (Baker's yeast).